Reading from the N-terminus, the 719-residue chain is Putative ankyrin repeat protein RBE_0319 (719 aa).

ANK repeat units follow at residues 377-406 (VAEE…EISS), 408-438 (TLIK…NINE), 442-472 (NGGT…EVNK), 476-506 (YGFT…EINQ), 510-540 (YQTT…KFNE), 544-572 (LGYT…DINQ), 576-605 (DGYT…NVNE), 609-639 (HGLT…EVSE), and 642-672 (QYGT…NLNK).

The sequence is that of Putative ankyrin repeat protein RBE_0319 from Rickettsia bellii (strain RML369-C).